The primary structure comprises 221 residues: Iron-sulfur cluster repair protein YtfE (221 aa).

The protein belongs to the RIC family. YtfE subfamily. As to quaternary structure, homodimer.

It localises to the cytoplasm. Its function is as follows. Di-iron-containing protein involved in the repair of iron-sulfur clusters damaged by oxidative and nitrosative stress conditions. This is Iron-sulfur cluster repair protein YtfE from Cronobacter sakazakii (strain ATCC BAA-894) (Enterobacter sakazakii).